Reading from the N-terminus, the 188-residue chain is Phosphoribosylglycinamide formyltransferase (188 aa).

12-14 (GSN) contacts N(1)-(5-phospho-beta-D-ribosyl)glycinamide. (6R)-10-formyltetrahydrofolate-binding positions include Lys66, 91 to 94 (MRLI), and Asn108. The active-site Proton donor is the His110.

Belongs to the GART family.

It catalyses the reaction N(1)-(5-phospho-beta-D-ribosyl)glycinamide + (6R)-10-formyltetrahydrofolate = N(2)-formyl-N(1)-(5-phospho-beta-D-ribosyl)glycinamide + (6S)-5,6,7,8-tetrahydrofolate + H(+). Its pathway is purine metabolism; IMP biosynthesis via de novo pathway; N(2)-formyl-N(1)-(5-phospho-D-ribosyl)glycinamide from N(1)-(5-phospho-D-ribosyl)glycinamide (10-formyl THF route): step 1/1. Catalyzes the transfer of a formyl group from 10-formyltetrahydrofolate to 5-phospho-ribosyl-glycinamide (GAR), producing 5-phospho-ribosyl-N-formylglycinamide (FGAR) and tetrahydrofolate. This Staphylococcus aureus (strain COL) protein is Phosphoribosylglycinamide formyltransferase.